The sequence spans 193 residues: dTTP/UTP pyrophosphatase (193 aa).

Catalysis depends on D71, which acts as the Proton acceptor.

Belongs to the Maf family. YhdE subfamily. The cofactor is a divalent metal cation.

The protein resides in the cytoplasm. The enzyme catalyses dTTP + H2O = dTMP + diphosphate + H(+). It carries out the reaction UTP + H2O = UMP + diphosphate + H(+). Its function is as follows. Nucleoside triphosphate pyrophosphatase that hydrolyzes dTTP and UTP. May have a dual role in cell division arrest and in preventing the incorporation of modified nucleotides into cellular nucleic acids. The sequence is that of dTTP/UTP pyrophosphatase from Dictyoglomus thermophilum (strain ATCC 35947 / DSM 3960 / H-6-12).